We begin with the raw amino-acid sequence, 204 residues long: Holliday junction branch migration complex subunit RuvA (204 aa).

The tract at residues 1–67 is domain I; sequence MIAFLSGHLV…ETELVLYGFG (67 aa). Residues 68 to 146 form a domain II region; sequence SPAERDLFVE…HWRQGMGVAD (79 aa). Positions 147-157 are flexible linker; that stretch reads QPLAGGPPMPI. Residues 157–204 form a domain III region; sequence IREEVEMALLALGYSTQEIQAALQALPTHPRPTEDWLRDAITYLSQQP.

This sequence belongs to the RuvA family. In terms of assembly, homotetramer. Forms an RuvA(8)-RuvB(12)-Holliday junction (HJ) complex. HJ DNA is sandwiched between 2 RuvA tetramers; dsDNA enters through RuvA and exits via RuvB. An RuvB hexamer assembles on each DNA strand where it exits the tetramer. Each RuvB hexamer is contacted by two RuvA subunits (via domain III) on 2 adjacent RuvB subunits; this complex drives branch migration. In the full resolvosome a probable DNA-RuvA(4)-RuvB(12)-RuvC(2) complex forms which resolves the HJ.

It localises to the cytoplasm. Its function is as follows. The RuvA-RuvB-RuvC complex processes Holliday junction (HJ) DNA during genetic recombination and DNA repair, while the RuvA-RuvB complex plays an important role in the rescue of blocked DNA replication forks via replication fork reversal (RFR). RuvA specifically binds to HJ cruciform DNA, conferring on it an open structure. The RuvB hexamer acts as an ATP-dependent pump, pulling dsDNA into and through the RuvAB complex. HJ branch migration allows RuvC to scan DNA until it finds its consensus sequence, where it cleaves and resolves the cruciform DNA. The protein is Holliday junction branch migration complex subunit RuvA of Synechococcus sp. (strain JA-2-3B'a(2-13)) (Cyanobacteria bacterium Yellowstone B-Prime).